The primary structure comprises 179 residues: Probable inosine/xanthosine triphosphatase (179 aa).

13–18 is a substrate binding site; sequence STNPVK. Mg(2+) is bound at residue glutamine 70.

Belongs to the YjjX NTPase family. Homodimer. Requires Mg(2+) as cofactor. The cofactor is Mn(2+).

It catalyses the reaction XTP + H2O = XDP + phosphate + H(+). It carries out the reaction ITP + H2O = IDP + phosphate + H(+). Phosphatase that hydrolyzes non-canonical purine nucleotides such as XTP and ITP to their respective diphosphate derivatives. Probably excludes non-canonical purines from DNA/RNA precursor pool, thus preventing their incorporation into DNA/RNA and avoiding chromosomal lesions. This chain is Probable inosine/xanthosine triphosphatase, found in Methanocaldococcus jannaschii (strain ATCC 43067 / DSM 2661 / JAL-1 / JCM 10045 / NBRC 100440) (Methanococcus jannaschii).